Reading from the N-terminus, the 397-residue chain is Vacuolar protein sorting-associated protein 37A (397 aa).

Positions methionine 1–leucine 22 are disordered. Serine 18 is subject to Phosphoserine. The 90-residue stretch at lysine 308 to leucine 397 folds into the VPS37 C-terminal domain.

The protein belongs to the VPS37 family. In terms of assembly, component of the ESCRT-I complex (endosomal sorting complex required for transport I) which consists of TSG101, VPS28, a VPS37 protein (VPS37A to -D) and MVB12A or MVB12B in a 1:1:1:1 stoichiometry. Interacts with TSG101, VPS28 and HGS. Component of an ESCRT-I complex (endosomal sorting complex required for transport I) which consists of TSG101, VPS28, VPS37A and UBAP1 in a 1:1:1:1 stoichiometry. In terms of tissue distribution, widely expressed. Examined tissues include heart, brain, placenta, liver, skeletal muscle, kidney and pancreas. More abundant in liver. Strongly decreased or undetected in hepatomas.

The protein resides in the late endosome membrane. It is found in the nucleus. Its function is as follows. Component of the ESCRT-I complex, a regulator of vesicular trafficking process. Required for the sorting of endocytic ubiquitinated cargos into multivesicular bodies. May be involved in cell growth and differentiation. This is Vacuolar protein sorting-associated protein 37A (VPS37A) from Homo sapiens (Human).